The chain runs to 290 residues: Protein translocase subunit SecF (290 aa).

6 helical membrane passes run 15-35, 131-151, 156-176, 184-204, 234-256, and 260-282; these read VFMILSLLFVIIGMYFFFTKG, KAILAAVLAIIVMLVYITVRF, AISAIINEAFVLLATISIFAI, SFIAAILTLLGYAINDNIIVF, TLYTVITTLLAITPLLIWGGVVL, and ILAIYLGIIIGTYSTIYIASAIL.

It belongs to the SecD/SecF family. SecF subfamily. As to quaternary structure, forms a complex with SecD. Part of the essential Sec protein translocation apparatus which comprises SecA, SecYEG and auxiliary proteins SecDF. Other proteins may also be involved.

Its subcellular location is the cell inner membrane. Functionally, part of the Sec protein translocase complex. Interacts with the SecYEG preprotein conducting channel. SecDF uses the proton motive force (PMF) to complete protein translocation after the ATP-dependent function of SecA. In Dictyoglomus turgidum (strain DSM 6724 / Z-1310), this protein is Protein translocase subunit SecF.